Here is a 394-residue protein sequence, read N- to C-terminus: Phosphoglycerate kinase (394 aa).

Substrate-binding positions include 21 to 23, Arg-37, 60 to 63, Arg-119, and Arg-152; these read DFN and HLGR. ATP is bound by residues Lys-202, Gly-293, Glu-324, and 350-353; that span reads GGDS.

The protein belongs to the phosphoglycerate kinase family. As to quaternary structure, monomer.

It is found in the cytoplasm. The catalysed reaction is (2R)-3-phosphoglycerate + ATP = (2R)-3-phospho-glyceroyl phosphate + ADP. The protein operates within carbohydrate degradation; glycolysis; pyruvate from D-glyceraldehyde 3-phosphate: step 2/5. In Caldanaerobacter subterraneus subsp. tengcongensis (strain DSM 15242 / JCM 11007 / NBRC 100824 / MB4) (Thermoanaerobacter tengcongensis), this protein is Phosphoglycerate kinase.